We begin with the raw amino-acid sequence, 404 residues long: MRSQPHVLGIVLAGGEGKRLYPLTADRAKPAVPFGGAYRLIDFVLSNLVNAGYLRLCVLTQYKSHSLDRHISQTWRLSGFAGEYITPVPAQQRLGPRWYTGSADAILQSLNLVYDEDPEYIVVFGADHVYRMDPEQMVQHHIESGAGVTVAGIRVPRSEAFAFGCIDSDESGRIVQFLEKPAHPPGTPDDPNMTFASMGNYVFTTKVLVDAIRADSENSDSDHDMGGDIIPALVEAGEASVYDFKDNIVPGATDRDRGYWRDVGTLDAFYDAHMDLVSVHPIFNLYNRRWPIRGETENLAPAKFVQGGLAQESVVGAGCILSAATVRNSVLSSNVMVDSGATVEGSVLMPGVRIGKGAVVRRAILDKNVVVGDGEIIGVDLERDKQRFAVSNGGVVAIGKGVWI.

Residues Tyr-99, Gly-164, 179–180, and Ser-197 contribute to the alpha-D-glucose 1-phosphate site; that span reads EK.

It belongs to the bacterial/plant glucose-1-phosphate adenylyltransferase family. In terms of assembly, homotetramer.

The catalysed reaction is alpha-D-glucose 1-phosphate + ATP + H(+) = ADP-alpha-D-glucose + diphosphate. The protein operates within glycan biosynthesis; glycogen biosynthesis. Its function is as follows. Involved in the biosynthesis of ADP-glucose, a building block required for the elongation reactions to produce glycogen. Catalyzes the reaction between ATP and alpha-D-glucose 1-phosphate (G1P) to produce pyrophosphate and ADP-Glc. This Rhodococcus jostii (strain RHA1) protein is Glucose-1-phosphate adenylyltransferase.